Reading from the N-terminus, the 206-residue chain is Probable GTP-binding protein EngB (206 aa).

The EngB-type G domain occupies 29 to 201; it reads ILPEVAVVGR…MIMIQDALND (173 aa). Residues 37–44, 64–68, 82–85, 149–152, and 180–182 contribute to the GTP site; these read GRSNVGKS, GKTQA, DLPG, TKID, and YSV. 2 residues coordinate Mg(2+): S44 and T66.

Belongs to the TRAFAC class TrmE-Era-EngA-EngB-Septin-like GTPase superfamily. EngB GTPase family. Mg(2+) is required as a cofactor.

Necessary for normal cell division and for the maintenance of normal septation. The sequence is that of Probable GTP-binding protein EngB from Protochlamydia amoebophila (strain UWE25).